Here is a 375-residue protein sequence, read N- to C-terminus: Ketohexokinase (375 aa).

Asp-319 is a beta-D-fructose binding site.

The protein belongs to the carbohydrate kinase PfkB family. As to quaternary structure, homodimer.

The catalysed reaction is beta-D-fructose + ATP = beta-D-fructose 1-phosphate + ADP + H(+). It participates in carbohydrate metabolism; fructose metabolism. With respect to regulation, activated in the presence of 0.5 M KCl. 85% activity at 3.5 M KCl. 60% activity without KCl. Catalyzes the ATP-dependent phosphorylation of the ketose sugar fructose to fructose-1-phosphate. Does not produce fructose-6-phosphate. The sugars D-glucose, D-galactose, L-rhamnose, D-xylose, L-arabinose and D-ribose are not substrates of this enzyme. The polypeptide is Ketohexokinase (Haloferax volcanii (strain ATCC 29605 / DSM 3757 / JCM 8879 / NBRC 14742 / NCIMB 2012 / VKM B-1768 / DS2) (Halobacterium volcanii)).